The chain runs to 114 residues: T cell receptor beta variable 19 (114 aa).

The N-terminal stretch at methionine 1–glycine 21 is a signal peptide. In terms of domain architecture, Ig-like spans glycine 22–isoleucine 114. Residue asparagine 37 is glycosylated (N-linked (GlcNAc...) asparagine). Cysteine 42 and cysteine 110 are joined by a disulfide.

Alpha-beta TR is a heterodimer composed of an alpha and beta chain; disulfide-linked. The alpha-beta TR is associated with the transmembrane signaling CD3 coreceptor proteins to form the TR-CD3 (TcR or TCR). The assembly of alpha-beta TR heterodimers with CD3 occurs in the endoplasmic reticulum where a single alpha-beta TR heterodimer associates with one CD3D-CD3E heterodimer, one CD3G-CD3E heterodimer and one CD247 homodimer forming a stable octameric structure. CD3D-CD3E and CD3G-CD3E heterodimers preferentially associate with TR alpha and TR beta chains, respectively. The association of the CD247 homodimer is the last step of TcR assembly in the endoplasmic reticulum and is required for transport to the cell surface. In terms of assembly, (Microbial infection) Interacts with Staphylococcus aureus enterotoxin type B/SEB.

It localises to the cell membrane. Its function is as follows. V region of the variable domain of T cell receptor (TR) beta chain that participates in the antigen recognition. Alpha-beta T cell receptors are antigen specific receptors which are essential to the immune response and are present on the cell surface of T lymphocytes. Recognize peptide-major histocompatibility (MH) (pMH) complexes that are displayed by antigen presenting cells (APC), a prerequisite for efficient T cell adaptive immunity against pathogens. Binding of alpha-beta TR to pMH complex initiates TR-CD3 clustering on the cell surface and intracellular activation of LCK that phosphorylates the ITAM motifs of CD3G, CD3D, CD3E and CD247 enabling the recruitment of ZAP70. In turn ZAP70 phosphorylates LAT, which recruits numerous signaling molecules to form the LAT signalosome. The LAT signalosome propagates signal branching to three major signaling pathways, the calcium, the mitogen-activated protein kinase (MAPK) kinase and the nuclear factor NF-kappa-B (NF-kB) pathways, leading to the mobilization of transcription factors that are critical for gene expression and essential for T cell growth and differentiation. The T cell repertoire is generated in the thymus, by V-(D)-J rearrangement. This repertoire is then shaped by intrathymic selection events to generate a peripheral T cell pool of self-MH restricted, non-autoaggressive T cells. Post-thymic interaction of alpha-beta TR with the pMH complexes shapes TR structural and functional avidity. The polypeptide is T cell receptor beta variable 19 (Homo sapiens (Human)).